Consider the following 394-residue polypeptide: HORMA domain-containing protein 1 (394 aa).

Residues 24–226 (HQSLVLVKRL…TPFHIFKVKV (203 aa)) form the HORMA domain. The segment at 252-394 (KILRDKDVED…RKFSEPKEHI (143 aa)) is disordered. Residues 253 to 282 (ILRDKDVEDEQEHYTSDDLDMETKMEEQEK) show a composition bias toward basic and acidic residues. 2 stretches are compositionally biased toward polar residues: residues 310-324 (LSIS…VNKT) and 343-352 (KMANGNQPVK). Residues 362 to 374 (QHESGRRVLHHFD) show a composition bias toward basic and acidic residues. S376 bears the Phosphoserine mark. A Nuclear localization signal motif is present at residues 383-386 (KRRK).

As to quaternary structure, interacts with HORMAD2. Interacts with IHO1. Post-translationally, phosphorylated at Ser-377 in a SPO11-dependent manner.

The protein resides in the nucleus. It localises to the chromosome. In terms of biological role, plays a key role in meiotic progression. Regulates 3 different functions during meiosis: ensures that sufficient numbers of processed DNA double-strand breaks (DSBs) are available for successful homology search by increasing the steady-state numbers of single-stranded DSB ends. Promotes synaptonemal-complex formation independently of its role in homology search. Plays a key role in the male mid-pachytene checkpoint and the female meiotic prophase checkpoint: required for efficient build-up of ATR activity on unsynapsed chromosome regions, a process believed to form the basis of meiotic silencing of unsynapsed chromatin (MSUC) and meiotic prophase quality control in both sexes. This is HORMA domain-containing protein 1 (HORMAD1) from Macaca fascicularis (Crab-eating macaque).